The sequence spans 761 residues: Protein transport protein SEC23 C (761 aa).

Positions 60, 63, 82, and 85 each coordinate Zn(2+). The zinc finger-like stretch occupies residues 60 to 85 (CRTCRSVLNPYSVVDFSACNWGCPFC).

The protein belongs to the SEC23/SEC24 family. SEC24 subfamily. As to quaternary structure, component of the coat protein complex II (COPII), composed of at least five proteins: the Sec23/24 complex, the Sec13/31 complex and Sar1.

It localises to the cytoplasmic vesicle. The protein localises to the COPII-coated vesicle membrane. It is found in the endoplasmic reticulum membrane. The protein resides in the membrane. Functionally, component of the coat protein complex II (COPII) which promotes the formation of transport vesicles from the endoplasmic reticulum (ER). The coat has two main functions, the physical deformation of the endoplasmic reticulum membrane into vesicles and the selection of cargo molecules. In Arabidopsis thaliana (Mouse-ear cress), this protein is Protein transport protein SEC23 C.